A 228-amino-acid polypeptide reads, in one-letter code: Lactate utilization protein A (228 aa).

It belongs to the LutA/YkgE family.

In terms of biological role, is involved in L-lactate degradation and allows cells to grow with lactate as the sole carbon source. In Lysinibacillus sphaericus (strain C3-41), this protein is Lactate utilization protein A.